A 199-amino-acid chain; its full sequence is Protein-L-isoaspartate O-methyltransferase (199 aa).

Serine 51 is a catalytic residue.

The protein belongs to the methyltransferase superfamily. L-isoaspartyl/D-aspartyl protein methyltransferase family.

The protein resides in the cytoplasm. It catalyses the reaction [protein]-L-isoaspartate + S-adenosyl-L-methionine = [protein]-L-isoaspartate alpha-methyl ester + S-adenosyl-L-homocysteine. Catalyzes the methyl esterification of L-isoaspartyl residues in peptides and proteins that result from spontaneous decomposition of normal L-aspartyl and L-asparaginyl residues. It plays a role in the repair and/or degradation of damaged proteins. The chain is Protein-L-isoaspartate O-methyltransferase from Fervidobacterium nodosum (strain ATCC 35602 / DSM 5306 / Rt17-B1).